A 171-amino-acid polypeptide reads, in one-letter code: 3-hydroxydecanoyl-[acyl-carrier-protein] dehydratase (171 aa).

The active site involves H70.

This sequence belongs to the thioester dehydratase family. FabA subfamily. As to quaternary structure, homodimer.

It is found in the cytoplasm. The enzyme catalyses a (3R)-hydroxyacyl-[ACP] = a (2E)-enoyl-[ACP] + H2O. The catalysed reaction is (3R)-hydroxydecanoyl-[ACP] = (2E)-decenoyl-[ACP] + H2O. It carries out the reaction (2E)-decenoyl-[ACP] = (3Z)-decenoyl-[ACP]. The protein operates within lipid metabolism; fatty acid biosynthesis. Its function is as follows. Necessary for the introduction of cis unsaturation into fatty acids. Catalyzes the dehydration of (3R)-3-hydroxydecanoyl-ACP to E-(2)-decenoyl-ACP and then its isomerization to Z-(3)-decenoyl-ACP. Can catalyze the dehydratase reaction for beta-hydroxyacyl-ACPs with saturated chain lengths up to 16:0, being most active on intermediate chain length. The protein is 3-hydroxydecanoyl-[acyl-carrier-protein] dehydratase of Shewanella denitrificans (strain OS217 / ATCC BAA-1090 / DSM 15013).